We begin with the raw amino-acid sequence, 450 residues long: tRNA-2-methylthio-N(6)-dimethylallyladenosine synthase (450 aa).

Residues 7–127 (KRLYIKTYGC…LPELIARAHR (121 aa)) enclose the MTTase N-terminal domain. [4Fe-4S] cluster-binding residues include Cys-16, Cys-52, Cys-90, Cys-165, Cys-169, and Cys-172. Positions 151–378 (QVSGVSAFLT…NQLLDEQQKA (228 aa)) constitute a Radical SAM core domain. Residues 381-443 (ILQVGKTMPV…KMSLGGVLET (63 aa)) form the TRAM domain.

It belongs to the methylthiotransferase family. MiaB subfamily. In terms of assembly, monomer. [4Fe-4S] cluster is required as a cofactor.

It localises to the cytoplasm. It catalyses the reaction N(6)-dimethylallyladenosine(37) in tRNA + (sulfur carrier)-SH + AH2 + 2 S-adenosyl-L-methionine = 2-methylsulfanyl-N(6)-dimethylallyladenosine(37) in tRNA + (sulfur carrier)-H + 5'-deoxyadenosine + L-methionine + A + S-adenosyl-L-homocysteine + 2 H(+). Functionally, catalyzes the methylthiolation of N6-(dimethylallyl)adenosine (i(6)A), leading to the formation of 2-methylthio-N6-(dimethylallyl)adenosine (ms(2)i(6)A) at position 37 in tRNAs that read codons beginning with uridine. This Caulobacter sp. (strain K31) protein is tRNA-2-methylthio-N(6)-dimethylallyladenosine synthase.